A 302-amino-acid polypeptide reads, in one-letter code: 4-hydroxy-tetrahydrodipicolinate synthase (302 aa).

T55 lines the pyruvate pocket. Y144 functions as the Proton donor/acceptor in the catalytic mechanism. The active-site Schiff-base intermediate with substrate is K172. Residue V214 coordinates pyruvate.

Belongs to the DapA family. Homotetramer; dimer of dimers.

It localises to the cytoplasm. The catalysed reaction is L-aspartate 4-semialdehyde + pyruvate = (2S,4S)-4-hydroxy-2,3,4,5-tetrahydrodipicolinate + H2O + H(+). It participates in amino-acid biosynthesis; L-lysine biosynthesis via DAP pathway; (S)-tetrahydrodipicolinate from L-aspartate: step 3/4. Its function is as follows. Catalyzes the condensation of (S)-aspartate-beta-semialdehyde [(S)-ASA] and pyruvate to 4-hydroxy-tetrahydrodipicolinate (HTPA). The sequence is that of 4-hydroxy-tetrahydrodipicolinate synthase from Synechococcus sp. (strain CC9902).